A 287-amino-acid chain; its full sequence is Probable 18S rRNA (guanine-N(7))-methyltransferase (287 aa).

The tract at residues 214–287 is disordered; it reads GVEGEEYEQQ…FSGRKRGPKF (74 aa). The segment covering 217-228 has biased composition (acidic residues); that stretch reads GEEYEQQEEEDS. Residues 234 to 245 are compositionally biased toward basic residues; it reads SNRKRDRRRVTK. A compositionally biased stretch (basic and acidic residues) spans 253 to 278; that stretch reads KTKEWIMNKKDRQRKQGREIKNDSKF.

The protein belongs to the class I-like SAM-binding methyltransferase superfamily. BUD23/WBSCR22 family.

The protein resides in the nucleus. It is found in the nucleoplasm. Its subcellular location is the cytoplasm. The protein localises to the perinuclear region. It catalyses the reaction a guanosine in 18S rRNA + S-adenosyl-L-methionine = an N(7)-methylguanosine in 18S rRNA + S-adenosyl-L-homocysteine. In terms of biological role, S-adenosyl-L-methionine-dependent methyltransferase that specifically methylates the N(7) position of a guanine in 18S rRNA. Important for biogenesis end export of the 40S ribosomal subunit independent on its methyltransferase activity. S-adenosyl-L-methionine-dependent methyltransferase that specifically methylates the N(7) position of a guanine in 18S rRNA. Requires the methyltransferase adapter protein TRM112 for full rRNA methyltransferase activity. Involved in the pre-rRNA processing steps leading to small-subunit rRNA production independently of its RNA-modifying catalytic activity. Important for biogenesis end export of the 40S ribosomal subunit independent on its methyltransferase activity. This Dictyostelium discoideum (Social amoeba) protein is Probable 18S rRNA (guanine-N(7))-methyltransferase.